The sequence spans 476 residues: Aspartyl/glutamyl-tRNA(Asn/Gln) amidotransferase subunit B (476 aa).

It belongs to the GatB/GatE family. GatB subfamily. As to quaternary structure, heterotrimer of A, B and C subunits.

The catalysed reaction is L-glutamyl-tRNA(Gln) + L-glutamine + ATP + H2O = L-glutaminyl-tRNA(Gln) + L-glutamate + ADP + phosphate + H(+). It catalyses the reaction L-aspartyl-tRNA(Asn) + L-glutamine + ATP + H2O = L-asparaginyl-tRNA(Asn) + L-glutamate + ADP + phosphate + 2 H(+). Allows the formation of correctly charged Asn-tRNA(Asn) or Gln-tRNA(Gln) through the transamidation of misacylated Asp-tRNA(Asn) or Glu-tRNA(Gln) in organisms which lack either or both of asparaginyl-tRNA or glutaminyl-tRNA synthetases. The reaction takes place in the presence of glutamine and ATP through an activated phospho-Asp-tRNA(Asn) or phospho-Glu-tRNA(Gln). The polypeptide is Aspartyl/glutamyl-tRNA(Asn/Gln) amidotransferase subunit B (Bacillus pumilus (strain SAFR-032)).